Reading from the N-terminus, the 465-residue chain is Protein hedgehog (465 aa).

The N-palmitoyl cysteine moiety is linked to residue Cys79. Residues Glu143, Glu144, Asp149, Thr179, Glu180, Asp183, and Asp185 each contribute to the Ca(2+) site. Gly251 is lipidated: Cholesterol glycine ester.

Belongs to the hedgehog family. As to quaternary structure, interacts with shf. In terms of processing, the C-terminal part of the hedgehog protein precursor displays an autoproteolysis activity that results in the cleavage of the full-length protein into two parts (N-product and C-product). In addition, the C-terminal part displays a cholesterol transferase activity that results by the covalent attachment of a cholesterol moiety to the C-terminal of the newly generated N-product. The N-product is the active species in both local and long-range signaling, whereas the C-product has no signaling activity. Cholesterylation is required for N-product targeting to lipid rafts and multimerization. Post-translationally, N-palmitoylation by Rasp of the hedgehog N-product, within the secretory pathway, is required for the embryonic and larval patterning activities of the hedgehog signal.

The protein localises to the nucleus. Its subcellular location is the cytoplasm. It localises to the cell membrane. It carries out the reaction glycyl-L-cysteinyl-[protein] + cholesterol + H(+) = [protein]-C-terminal glycyl cholesterol ester + N-terminal L-cysteinyl-[protein]. Its function is as follows. The C-terminal part of the hedgehog protein precursor displays an autoproteolysis activity that results in the cleavage of the full-length protein into two parts (N-product and C-product). In addition, the C-terminal part displays a cholesterol transferase activity that results by the covalent attachment of a cholesterol moiety to the C-terminal of the newly generated N-product. Once cleaved, the C-product has no signaling activity and diffuses from the cell. The dually lipidated hedgehog protein N-product is a morphogen which is essential for a variety of patterning events during development. Establishes the anterior-posterior axis of the embryonic segments and patterns the larval imaginal disks. Binds to the patched (ptc) receptor, which functions in association with smoothened (smo), to activate the transcription of target genes wingless (wg), decapentaplegic (dpp) and ptc. In the absence of hh, ptc represses the constitutive signaling activity of smo through fused (fu). Essential component of a signaling pathway which regulates the Duox-dependent gut immune response to bacterial uracil; required to activate Cad99C-dependent endosome formation, norpA-dependent Ca2+ mobilization and p38 MAPK, which are essential steps in the Duox-dependent production of reactive oxygen species (ROS) in response to intestinal bacterial infection. During photoreceptor differentiation, it up-regulates transcription of Ubr3, which in turn promotes the hh-signaling pathway by mediating the ubiquitination and degradation of cos. This Drosophila sechellia (Fruit fly) protein is Protein hedgehog.